The chain runs to 345 residues: Protein SHI RELATED SEQUENCE 7 (345 aa).

The interval 7–28 is disordered; that stretch reads LGGRDHNKQDHHQEKDHNEDKS. The span at 9–28 shows a compositional bias: basic and acidic residues; sequence GRDHNKQDHHQEKDHNEDKS. Zn(2+) is bound by residues cysteine 119, cysteine 122, cysteine 130, cysteine 135, cysteine 139, and cysteine 146. The zn(2)-C6 fungal-type; degenerate DNA-binding region spans 119 to 146; it reads CQDCGNQAKKDCPHMRCRTCCKSRGFDC. Positions 168–200 are disordered; that stretch reads AVLPAKRIRDANSRGGGDDDDDDKEDEKNDSCG. The Required for homo- and heterodimerization motif lies at 256–259; the sequence is IGGH.

Belongs to the SHI protein family. Mainly expressed in the filaments of flowers, the shoot apex regions and pollen. Also present in leaves.

It localises to the nucleus. Functionally, transcription activator that binds DNA on 5'-ACTCTAC-3' and promotes auxin homeostasis-regulating gene expression (e.g. YUC genes), as well as genes affecting stamen development, cell expansion and timing of flowering. Synergistically with other SHI-related proteins, regulates gynoecium, stamen and leaf development in a dose-dependent manner, controlling apical-basal patterning. Promotes style and stigma formation, and influences vascular development during gynoecium development. May also have a role in the formation and/or maintenance of the shoot apical meristem (SAM). Regulates anther dehiscence and floral development. This Arabidopsis thaliana (Mouse-ear cress) protein is Protein SHI RELATED SEQUENCE 7 (SRS7).